A 444-amino-acid polypeptide reads, in one-letter code: NADH-ubiquinone oxidoreductase chain 4 (444 aa).

The next 13 helical transmembrane spans lie at 4–24 (YLFMIIFLIPICLLGNCWWLV), 28–48 (IFLLSFIFMISLYSYSDLSMI), 53–73 (GVDFYSFMLILLSLWICCLMI), 87–107 (NFFVFVVLLLLIMLFCSFSSL), 109–129 (LFSFYIFFESSLVPTLFLILG), 141–161 (VYLMFYTLVASLPLLLVLFSI), 173–193 (LIDFGSFYFLFYVFSIFAFLV), 212–232 (PISGSMILAGILLKLGGYGIF), 245–265 (FNYFVLSLSLFGGVIISFVCF), 272–294 (SLIAYSSVAHMSLVICGLMTMNW), 306–326 (GHGISSSGLFCLSNIIYELLG), 330–350 (LLINKGMINLMPSMTIWWFLL), and 373–393 (IISWSSYMILLLIFLSFFSAV).

The protein belongs to the complex I subunit 4 family.

It localises to the mitochondrion membrane. The catalysed reaction is a ubiquinone + NADH + 5 H(+)(in) = a ubiquinol + NAD(+) + 4 H(+)(out). In terms of biological role, core subunit of the mitochondrial membrane respiratory chain NADH dehydrogenase (Complex I) that is believed to belong to the minimal assembly required for catalysis. Complex I functions in the transfer of electrons from NADH to the respiratory chain. The immediate electron acceptor for the enzyme is believed to be ubiquinone. The polypeptide is NADH-ubiquinone oxidoreductase chain 4 (ND4) (Locusta migratoria (Migratory locust)).